Here is a 441-residue protein sequence, read N- to C-terminus: Deoxyguanosinetriphosphate triphosphohydrolase-like protein (441 aa).

The HD domain maps to 59–250 (RLTHSLEVSQ…MELADDTAYA (192 aa)).

The protein belongs to the dGTPase family. Type 2 subfamily.

The chain is Deoxyguanosinetriphosphate triphosphohydrolase-like protein from Shewanella loihica (strain ATCC BAA-1088 / PV-4).